Here is a 1555-residue protein sequence, read N- to C-terminus: Pre-mRNA cleavage complex 2 protein Pcf11 (1555 aa).

Serine 2 is subject to N-acetylserine. Positions 14 to 142 (AREDACRDYQ…ALDVRVNSLD (129 aa)) constitute a CID domain. Serine 120 carries the phosphoserine; by WNK1 modification. Threonine 121 carries the post-translational modification Phosphothreonine; by WNK1. The disordered stretch occupies residues 167-186 (NKSPEEPSTPGTVVSSPSIS). Phosphoserine is present on residues serine 169 and serine 182. Low complexity predominate over residues 174 to 186 (STPGTVVSSPSIS). Residues 202–239 (QLIRQQLLAKQKQLLELQQKKLELELEQAKAQLAVSLS) adopt a coiled-coil conformation. The segment at 266–648 (VKAPHQVPVQ…QQQHRLSVDA (383 aa)) is disordered. Lysine 291 is covalently cross-linked (Glycyl lysine isopeptide (Lys-Gly) (interchain with G-Cter in SUMO2)). The span at 307–317 (HGKDQSHRKEF) shows a compositional bias: basic and acidic residues. Residues 320-333 (NTLNQSDTKTSKTI) show a composition bias toward polar residues. Residue lysine 328 forms a Glycyl lysine isopeptide (Lys-Gly) (interchain with G-Cter in SUMO2) linkage. 3 stretches are compositionally biased toward basic and acidic residues: residues 342–364 (KQEK…DSKS), 380–421 (HTKD…DVKE), and 427–442 (EKKD…EHRL). Residue lysine 456 forms a Glycyl lysine isopeptide (Lys-Gly) (interchain with G-Cter in SUMO2) linkage. A Phosphothreonine modification is found at threonine 459. The segment covering 475 to 486 (STRKRSRSRSPK) has biased composition (basic residues). Phosphoserine occurs at positions 489, 494, 509, and 511. Positions 494-508 (SPKRRDRRSPKRRQR) are enriched in basic residues. Over residues 529-567 (SHMEEFTPPSREDRNAKRSTKQDIRDPRRMKKTEEERPQ) the composition is skewed to basic and acidic residues. Over residues 568–578 (ETTNQHSTKSG) the composition is skewed to polar residues. Basic and acidic residues predominate over residues 599–615 (SGWEENKSLQQVDEHSK). Phosphoserine is present on serine 645. Lysine 654 participates in a covalent cross-link: Glycyl lysine isopeptide (Lys-Gly) (interchain with G-Cter in SUMO2). Position 705 is a phosphoserine (serine 705). Disordered stretches follow at residues 707–732 (FNDR…PASR) and 749–781 (RPLF…PRID). Residues 716 to 725 (PRYEDSDKPF) are compositionally biased toward basic and acidic residues. Lysine 723 is covalently cross-linked (Glycyl lysine isopeptide (Lys-Gly) (interchain with G-Cter in SUMO2)). Phosphoserine is present on residues serine 728 and serine 777. Threonine 785 is subject to Phosphothreonine. Serine 794 is modified (phosphoserine). Residues arginine 805, arginine 820, and arginine 833 each carry the asymmetric dimethylarginine modification. At serine 851 the chain carries Phosphoserine. Arginine 929, arginine 942, arginine 955, arginine 981, arginine 994, and arginine 1007 each carry asymmetric dimethylarginine. The interval 1056–1081 (HGQPGPRFERTPGQPGPQRFDGPPGQ) is disordered. Asymmetric dimethylarginine occurs at positions 1093 and 1104. Disordered stretches follow at residues 1127–1147 (VSFN…NAPS) and 1159–1187 (FDSP…RASG). Position 1161 is a phosphoserine (serine 1161). Over residues 1162–1175 (PQGPNFNGPHGPGN) the composition is skewed to low complexity. Residue lysine 1278 forms a Glycyl lysine isopeptide (Lys-Gly) (interchain with G-Cter in SUMO2) linkage. Polar residues predominate over residues 1289–1298 (SATTQVSEVT). The interval 1289–1315 (SATTQVSEVTAQPPPEEEEDQNEDQDV) is disordered. Residues 1303–1315 (PEEEEDQNEDQDV) show a composition bias toward acidic residues. Residues lysine 1419, lysine 1511, and lysine 1524 each participate in a glycyl lysine isopeptide (Lys-Gly) (interchain with G-Cter in SUMO2) cross-link. The segment at 1516 to 1555 (EPCDSPKVKEERIDTPPACTEESIATPSEIKTENDTVESV) is disordered. Basic and acidic residues predominate over residues 1519–1529 (DSPKVKEERID). At threonine 1530 the chain carries Phosphothreonine. Lysine 1546 is covalently cross-linked (Glycyl lysine isopeptide (Lys-Gly) (interchain with G-Cter in SUMO2)).

As to quaternary structure, associates with the phosphorylated CTD domain of POLR2A /RNA polymerase II. In terms of processing, phosphorylation at Ser-120 and/or Thr-121 by WNK1 weakens its association with POLR2A/RNA polymerase II, promoting transcript release from the chromatin template and mRNA export to the cytoplasm.

The protein localises to the nucleus. In terms of biological role, component of pre-mRNA cleavage complex II, which promotes transcription termination by RNA polymerase II. This Homo sapiens (Human) protein is Pre-mRNA cleavage complex 2 protein Pcf11.